The primary structure comprises 1371 residues: Probable serine/threonine-protein kinase DDB_G0293292 (1371 aa).

Protein kinase domains follow at residues 9–269 (NKIL…HPNT) and 1131–1371 (FKEV…QPTL). ATP contacts are provided by residues 15-23 (IDDGNTKRK) and K39. Catalysis depends on D143, which acts as the Proton acceptor.

The protein belongs to the protein kinase superfamily. Ser/Thr protein kinase family.

The catalysed reaction is L-seryl-[protein] + ATP = O-phospho-L-seryl-[protein] + ADP + H(+). It carries out the reaction L-threonyl-[protein] + ATP = O-phospho-L-threonyl-[protein] + ADP + H(+). In Dictyostelium discoideum (Social amoeba), this protein is Probable serine/threonine-protein kinase DDB_G0293292.